The chain runs to 216 residues: Glycerol uptake facilitator protein-like 6 (216 aa).

2 consecutive transmembrane segments (helical) span residues 5-25 and 30-50; these read LAEF…VVIA and LAIG…FGGI. The short motif at 56 to 58 is the NPA 1 element; the sequence is NPA. Helical transmembrane passes span 72–92, 114–134, and 147–167; these read ADAI…SAAV, IGSG…LMVI, and FAGL…LNLT. Positions 172–174 match the NPA 2 motif; the sequence is NPA. A helical transmembrane segment spans residues 191–213; sequence LWVYILAPEVGAILAAFCARVMG.

The protein belongs to the MIP/aquaporin (TC 1.A.8) family.

It localises to the cell membrane. Functionally, probable transporter that facilitates the transmembrane diffusion of an unknown substrate. Is not permeable to water, dihydroxyacetone, glycerol, urea, H(2)O(2) and D/L-lactic acid. The chain is Glycerol uptake facilitator protein-like 6 from Lactiplantibacillus plantarum (strain ATCC BAA-793 / NCIMB 8826 / WCFS1) (Lactobacillus plantarum).